The primary structure comprises 210 residues: High frequency lysogenization protein HflD homolog (210 aa).

Positions 103 to 130 (EAKAKLAERLQQIERQLPLYENDIMADQ) form a coiled coil.

This sequence belongs to the HflD family.

The protein resides in the cytoplasm. It localises to the cell inner membrane. This Actinobacillus pleuropneumoniae serotype 3 (strain JL03) protein is High frequency lysogenization protein HflD homolog.